Consider the following 324-residue polypeptide: Lipoyl synthase (324 aa).

C65, C70, C76, C91, C95, C98, and S302 together coordinate [4Fe-4S] cluster. In terms of domain architecture, Radical SAM core spans 77–291 (WEDREATFLI…AQYAEGLGFA (215 aa)).

This sequence belongs to the radical SAM superfamily. Lipoyl synthase family. [4Fe-4S] cluster serves as cofactor.

It is found in the cytoplasm. The catalysed reaction is [[Fe-S] cluster scaffold protein carrying a second [4Fe-4S](2+) cluster] + N(6)-octanoyl-L-lysyl-[protein] + 2 oxidized [2Fe-2S]-[ferredoxin] + 2 S-adenosyl-L-methionine + 4 H(+) = [[Fe-S] cluster scaffold protein] + N(6)-[(R)-dihydrolipoyl]-L-lysyl-[protein] + 4 Fe(3+) + 2 hydrogen sulfide + 2 5'-deoxyadenosine + 2 L-methionine + 2 reduced [2Fe-2S]-[ferredoxin]. The protein operates within protein modification; protein lipoylation via endogenous pathway; protein N(6)-(lipoyl)lysine from octanoyl-[acyl-carrier-protein]: step 2/2. Functionally, catalyzes the radical-mediated insertion of two sulfur atoms into the C-6 and C-8 positions of the octanoyl moiety bound to the lipoyl domains of lipoate-dependent enzymes, thereby converting the octanoylated domains into lipoylated derivatives. This chain is Lipoyl synthase, found in Mycobacterium ulcerans (strain Agy99).